A 215-amino-acid chain; its full sequence is MNNLFVLIKREFILQHRINNIIKYIVIFFLFYIISTVLINSEKDINKFGLIFSVICLLISLISFSTIIFKSDVEDGSLELLLSIVSCEKIIFAKFVAIFICTTVGLIFVLPVIYVFFDQILLEIALFFISVWMIFVLSSSLVVLSGSVQCYFKKNTNFVGTFIMPLLIPNIIMTGLILQDNNLQLIFIMIGINLIFLPVSFCLSAYLIKNIYNIT.

6 helical membrane passes run 21 to 40, 50 to 69, 95 to 117, 122 to 144, 157 to 179, and 185 to 207; these read IIKY…VLIN, LIFS…TIIF, FVAI…YVFF, LEIA…LVVL, NFVG…LILQ, and LIFI…SAYL.

The protein belongs to the CcmB/CycW/HelB family.

It is found in the cell membrane. This is an uncharacterized protein from Rickettsia prowazekii (strain Madrid E).